The chain runs to 132 residues: Glycine cleavage system H protein (132 aa).

The Lipoyl-binding domain maps to 24 to 107; sequence TATIGLSAFA…GEEGWLIKVR (84 aa). Residue K65 is modified to N6-lipoyllysine.

The protein belongs to the GcvH family. The glycine cleavage system is composed of four proteins: P, T, L and H. It depends on (R)-lipoate as a cofactor.

In terms of biological role, the glycine cleavage system catalyzes the degradation of glycine. The H protein shuttles the methylamine group of glycine from the P protein to the T protein. In Synechocystis sp. (strain ATCC 27184 / PCC 6803 / Kazusa), this protein is Glycine cleavage system H protein.